The following is a 266-amino-acid chain: Type III pantothenate kinase (266 aa).

Residue 15-22 participates in ATP binding; sequence EIGNSSTS. Substrate contacts are provided by residues tyrosine 105 and 112-115; that span reads GADR. Aspartate 114 (proton acceptor) is an active-site residue. Aspartate 135 contributes to the K(+) binding site. Threonine 138 serves as a coordination point for ATP. Position 191 (threonine 191) interacts with substrate.

This sequence belongs to the type III pantothenate kinase family. In terms of assembly, homodimer. NH4(+) serves as cofactor. Requires K(+) as cofactor.

It localises to the cytoplasm. It catalyses the reaction (R)-pantothenate + ATP = (R)-4'-phosphopantothenate + ADP + H(+). It functions in the pathway cofactor biosynthesis; coenzyme A biosynthesis; CoA from (R)-pantothenate: step 1/5. Catalyzes the phosphorylation of pantothenate (Pan), the first step in CoA biosynthesis. The sequence is that of Type III pantothenate kinase from Chlorobium chlorochromatii (strain CaD3).